The primary structure comprises 325 residues: Beta-ketoacyl-[acyl-carrier-protein] synthase III (325 aa).

Residues C114 and H252 contribute to the active site. Positions 253–257 (QANFR) are ACP-binding. N282 is a catalytic residue.

This sequence belongs to the thiolase-like superfamily. FabH family. Homodimer.

Its subcellular location is the cytoplasm. It carries out the reaction malonyl-[ACP] + acetyl-CoA + H(+) = 3-oxobutanoyl-[ACP] + CO2 + CoA. The protein operates within lipid metabolism; fatty acid biosynthesis. Catalyzes the condensation reaction of fatty acid synthesis by the addition to an acyl acceptor of two carbons from malonyl-ACP. Catalyzes the first condensation reaction which initiates fatty acid synthesis and may therefore play a role in governing the total rate of fatty acid production. Possesses both acetoacetyl-ACP synthase and acetyl transacylase activities. Its substrate specificity determines the biosynthesis of branched-chain and/or straight-chain of fatty acids. This chain is Beta-ketoacyl-[acyl-carrier-protein] synthase III, found in Novosphingobium aromaticivorans (strain ATCC 700278 / DSM 12444 / CCUG 56034 / CIP 105152 / NBRC 16084 / F199).